The following is a 320-amino-acid chain: tRNA dimethylallyltransferase (320 aa).

16–23 (GPTASGKT) is a binding site for ATP. Residue 18-23 (TASGKT) coordinates substrate. Interaction with substrate tRNA regions lie at residues 41–44 (DSAL), 165–169 (QRIQR), and 247–252 (RCVGYR).

The protein belongs to the IPP transferase family. In terms of assembly, monomer. The cofactor is Mg(2+).

It carries out the reaction adenosine(37) in tRNA + dimethylallyl diphosphate = N(6)-dimethylallyladenosine(37) in tRNA + diphosphate. Its function is as follows. Catalyzes the transfer of a dimethylallyl group onto the adenine at position 37 in tRNAs that read codons beginning with uridine, leading to the formation of N6-(dimethylallyl)adenosine (i(6)A). The chain is tRNA dimethylallyltransferase from Azoarcus sp. (strain BH72).